A 162-amino-acid polypeptide reads, in one-letter code: Large ribosomal subunit protein uL15 (162 aa).

The span at 1 to 10 (MNLNELRDNA) shows a compositional bias: basic and acidic residues. Positions 1–39 (MNLNELRDNAGSRYRKKRLGRGIGSGKGKTSGKGVKGQK) are disordered. The span at 21 to 35 (RGIGSGKGKTSGKGV) shows a compositional bias: gly residues.

This sequence belongs to the universal ribosomal protein uL15 family. Part of the 50S ribosomal subunit.

Functionally, binds to the 23S rRNA. The polypeptide is Large ribosomal subunit protein uL15 (Gluconacetobacter diazotrophicus (strain ATCC 49037 / DSM 5601 / CCUG 37298 / CIP 103539 / LMG 7603 / PAl5)).